The sequence spans 296 residues: NAD kinase (296 aa).

Residue D72 is the Proton acceptor of the active site. NAD(+) is bound by residues 72–73 (DG), 146–147 (ND), R157, K174, D176, 187–192 (TAYALS), and Q247.

Belongs to the NAD kinase family. It depends on a divalent metal cation as a cofactor.

Its subcellular location is the cytoplasm. It catalyses the reaction NAD(+) + ATP = ADP + NADP(+) + H(+). In terms of biological role, involved in the regulation of the intracellular balance of NAD and NADP, and is a key enzyme in the biosynthesis of NADP. Catalyzes specifically the phosphorylation on 2'-hydroxyl of the adenosine moiety of NAD to yield NADP. The polypeptide is NAD kinase (Pseudomonas fluorescens (strain SBW25)).